The primary structure comprises 264 residues: 3-methyl-2-oxobutanoate hydroxymethyltransferase (264 aa).

2 residues coordinate Mg(2+): Asp45 and Asp84. 3-methyl-2-oxobutanoate is bound by residues 45–46 (DS), Asp84, and Lys112. Glu114 is a Mg(2+) binding site. Residue Glu181 is the Proton acceptor of the active site.

Belongs to the PanB family. Homodecamer; pentamer of dimers. The cofactor is Mg(2+).

The protein resides in the cytoplasm. It catalyses the reaction 3-methyl-2-oxobutanoate + (6R)-5,10-methylene-5,6,7,8-tetrahydrofolate + H2O = 2-dehydropantoate + (6S)-5,6,7,8-tetrahydrofolate. It participates in cofactor biosynthesis; (R)-pantothenate biosynthesis; (R)-pantoate from 3-methyl-2-oxobutanoate: step 1/2. Functionally, catalyzes the reversible reaction in which hydroxymethyl group from 5,10-methylenetetrahydrofolate is transferred onto alpha-ketoisovalerate to form ketopantoate. This chain is 3-methyl-2-oxobutanoate hydroxymethyltransferase, found in Escherichia coli O1:K1 / APEC.